A 247-amino-acid chain; its full sequence is Suppressor of silencing P0 (247 aa).

In terms of domain architecture, F-box-like spans 76 to 95; sequence LPRHLHYECLEWGLLCGTHP.

This sequence belongs to the polerovirus P0 protein family.

In terms of biological role, suppressor of RNA-mediated gene silencing, also known as post-transcriptional gene silencing (PTGS), a mechanism of plant viral defense that limits the accumulation of viral RNAs. The P0 protein suppresses local PTGS using its F-box-like domain to mediate destabilization and degradation of the AGO1 protein, although not via an interaction with host SKP1A. Participates, together with the proteins P1 and P7, in the inhibition of the induction of aphid-induced host phytohormones. This could play a role in the attraction to the infected plants by aphids. The polypeptide is Suppressor of silencing P0 (Potato leafroll virus (strain Potato/Netherlands/Wageningen/1989) (PLrV)).